Reading from the N-terminus, the 37-residue chain is Large ribosomal subunit protein bL36c (37 aa).

The protein belongs to the bacterial ribosomal protein bL36 family.

It is found in the plastid. It localises to the chloroplast. This chain is Large ribosomal subunit protein bL36c, found in Cycas taitungensis (Prince sago).